The chain runs to 295 residues: Small ribosomal subunit protein uS2 (295 aa).

The disordered stretch occupies residues 261–295; the sequence is QAKKFSKTKNIDEETNTEFEQVLNDADENKNSDNA.

This sequence belongs to the universal ribosomal protein uS2 family.

This is Small ribosomal subunit protein uS2 from Rickettsia rickettsii (strain Sheila Smith).